Here is a 160-residue protein sequence, read N- to C-terminus: Cyclic pyranopterin monophosphate synthase (160 aa).

Residues 77-79 (MCH) and 114-115 (ME) contribute to the substrate site. D129 is a catalytic residue.

The protein belongs to the MoaC family. Homohexamer; trimer of dimers.

It catalyses the reaction (8S)-3',8-cyclo-7,8-dihydroguanosine 5'-triphosphate = cyclic pyranopterin phosphate + diphosphate. It participates in cofactor biosynthesis; molybdopterin biosynthesis. In terms of biological role, catalyzes the conversion of (8S)-3',8-cyclo-7,8-dihydroguanosine 5'-triphosphate to cyclic pyranopterin monophosphate (cPMP). The chain is Cyclic pyranopterin monophosphate synthase from Listeria monocytogenes serotype 4a (strain HCC23).